Consider the following 502-residue polypeptide: Glutamate--tRNA ligase (502 aa).

The short motif at 12-22 (PSPTGYLHVGG) is the 'HIGH' region element. The 'KMSKS' region motif lies at 259-263 (KLSKR). Position 262 (lysine 262) interacts with ATP.

Belongs to the class-I aminoacyl-tRNA synthetase family. Glutamate--tRNA ligase type 1 subfamily. In terms of assembly, monomer.

The protein localises to the cytoplasm. The catalysed reaction is tRNA(Glu) + L-glutamate + ATP = L-glutamyl-tRNA(Glu) + AMP + diphosphate. Catalyzes the attachment of glutamate to tRNA(Glu) in a two-step reaction: glutamate is first activated by ATP to form Glu-AMP and then transferred to the acceptor end of tRNA(Glu). This is Glutamate--tRNA ligase from Chlorobium chlorochromatii (strain CaD3).